The primary structure comprises 353 residues: 2-oxoglutarate-Fe(II) type oxidoreductase ppzD (353 aa).

Residues 181–292 (NTSELRLNHY…RYSVAYFGKP (112 aa)) enclose the Fe2OG dioxygenase domain. Fe cation-binding residues include His208, Asp210, and His268. Residue Arg283 participates in 2-oxoglutarate binding.

The protein belongs to the iron/ascorbate-dependent oxidoreductase family. Requires Fe(2+) as cofactor.

The catalysed reaction is L-proline + 2-oxoglutarate + O2 = trans-4-hydroxy-L-proline + succinate + CO2. It carries out the reaction L-proline + 2-oxoglutarate + O2 = trans-3-hydroxy-L-proline + succinate + CO2. The enzyme catalyses D-proline + 2-oxoglutarate + O2 = cis-4-hydroxy-D-proline + succinate + CO2. It participates in secondary metabolite biosynthesis. Functionally, 2-oxoglutarate-Fe(II) type oxidoreductase; part of the gene cluster that mediates the biosynthesis of pyrrolopyrazines, secondary metabolites showing insecticidal activity. Within the pathway, ppzD converts L-proline into trans-4-hydroxy-L-proline as a major product, yielding a key precursor for peramine biosynthesis. PpzD is also able to convert L-proline into trans-3-hydroxy-L-proline. The single multifunctional NRPS ppzA is sufficient to produce peramine via condensation of 1-pyrroline-5-carboxylate and arginine, N-methylation of the alpha-amino group of arginine and reduction of the thioester and the cyclization to form an iminium ion resulting in release from the peptide synthetase. Deprotonation of this intermediate and oxidation of the pyrroline ring would give rise to peramine. In Epichloe species that produce only peramine, the peramine synthetase gene is not localized in a gene cluster, in contrast to Metarhizium species that contain additional pyrrolopyrazine biosynthesis genes. The 2-oxoglutarate-Fe(II) type oxidoreductase ppzC hydroxylates peramine to yield the newly identified compound 8-hydroxyperamine whereas ppzD converts L-proline into trans-4-hydroxy-L-proline, a precursor of peramine biosynthesis. In Metarhizium rileyi (strain RCEF 4871) (Nomuraea rileyi), this protein is 2-oxoglutarate-Fe(II) type oxidoreductase ppzD.